Reading from the N-terminus, the 234-residue chain is Ribose-5-phosphate isomerase A (234 aa).

Substrate is bound by residues 28-31, 85-88, and 98-101; these read TGST, DGAD, and KGLG. The active-site Proton acceptor is the glutamate 107. Lysine 125 provides a ligand contact to substrate.

It belongs to the ribose 5-phosphate isomerase family. Homodimer.

The catalysed reaction is aldehydo-D-ribose 5-phosphate = D-ribulose 5-phosphate. It functions in the pathway carbohydrate degradation; pentose phosphate pathway; D-ribose 5-phosphate from D-ribulose 5-phosphate (non-oxidative stage): step 1/1. Functionally, catalyzes the reversible conversion of ribose-5-phosphate to ribulose 5-phosphate. This chain is Ribose-5-phosphate isomerase A, found in Roseiflexus castenholzii (strain DSM 13941 / HLO8).